A 102-amino-acid chain; its full sequence is Large ribosomal subunit protein uL24 (102 aa).

This sequence belongs to the universal ribosomal protein uL24 family. In terms of assembly, part of the 50S ribosomal subunit.

Functionally, one of two assembly initiator proteins, it binds directly to the 5'-end of the 23S rRNA, where it nucleates assembly of the 50S subunit. In terms of biological role, one of the proteins that surrounds the polypeptide exit tunnel on the outside of the subunit. The protein is Large ribosomal subunit protein uL24 of Ralstonia nicotianae (strain ATCC BAA-1114 / GMI1000) (Ralstonia solanacearum).